Reading from the N-terminus, the 525-residue chain is Peptide chain release factor 3 (525 aa).

The 269-residue stretch at 11-279 (NNRRTFAIIS…AYLKYAPKPA (269 aa)) folds into the tr-type G domain. GTP-binding positions include 20–27 (SHPDAGKT), 88–92 (DTPGH), and 142–145 (NKLD).

Belongs to the TRAFAC class translation factor GTPase superfamily. Classic translation factor GTPase family. PrfC subfamily.

Its subcellular location is the cytoplasm. Functionally, increases the formation of ribosomal termination complexes and stimulates activities of RF-1 and RF-2. It binds guanine nucleotides and has strong preference for UGA stop codons. It may interact directly with the ribosome. The stimulation of RF-1 and RF-2 is significantly reduced by GTP and GDP, but not by GMP. This Ligilactobacillus salivarius (strain UCC118) (Lactobacillus salivarius) protein is Peptide chain release factor 3.